The following is a 1373-amino-acid chain: Disease resistance protein RRS1 (1373 aa).

One can recognise a TIR domain in the interval Glu-5–His-146. In terms of domain architecture, NB-ARC spans Ile-170–His-421. Residue Gly-179–Thr-186 participates in ATP binding. LRR repeat units lie at residues Ser-498–Asn-522, Asn-535–Pro-553, Asn-554–Pro-575, His-577–Leu-598, Ala-621–Arg-646, Pro-665–Pro-688, Leu-742–Gly-766, Pro-768–Ile-793, and Pro-831–Leu-854. The Nuclear localization signal signature appears at Arg-988–Asp-1005. A DNA-binding region (WRKY) is located at residues Ile-1204–Pro-1272. The disordered stretch occupies residues Arg-1300–Ala-1323.

In terms of assembly, interacts with PopP2, a R.solanacearum type III effector.

It is found in the nucleus. Functionally, transcription factor. Interacts specifically with the W box (5'-(T)TGAC[CT]-3'), a frequently occurring elicitor-responsive cis-acting element. Also acts as a disease resistance protein involved in resistance to fungal and bacterial pathogens, including R.solanacearum, P.syringae pv. tomato and C.higginsianum. In presence of RPS4, elicites an EDS1-dependent hypersensitive response. This Arabidopsis thaliana (Mouse-ear cress) protein is Disease resistance protein RRS1.